The sequence spans 262 residues: MKFVALALTLLLALGSQANLFQADAPTQLEHYKAAALVYLNQVKDQAEKALDNLDGTDYEQYKLQLSESLTKLQEYAQTTSQALTPYAETISTQLMENTKQLRERVMTDVEDLRSKLEPHRAELYTALQKHIDEYREKLEPVFQEYSALNRQNAEQLRAKLEPLMDDIRKAFESNIEETKSKVVPMVEAVRTKLTERLEDLRTMAAPYAEEYKEQLVKAVEEAREKIAPHTQDLQTRMEPYMENVRTTFAQMYETIAKAIQA.

Positions 1-18 (MKFVALALTLLLALGSQA) are cleaved as a signal peptide. Residues 32–63 (YKAAALVYLNQVKDQAEKALDNLDGTDYEQYK) form a 3 X approximate tandem repeats region. Repeat copies occupy residues 64–85 (LQLS…QALT) and 87–107 (YAET…ERVM). The 10 X approximate tandem repeats stretch occupies residues 64 to 262 (LQLSESLTKL…YETIAKAIQA (199 aa)). One copy of the 3; half-length repeat lies at 108–118 (TDVEDLRSKLE). 5 consecutive repeat copies span residues 119–140 (PHRA…EKLE), 141–162 (PVFQ…AKLE), 163–184 (PLMD…SKVV), 185–206 (PMVE…TMAA), and 207–228 (PYAE…EKIA). The 9; half-length repeat unit spans residues 229-239 (PHTQDLQTRME). Repeat unit 10 spans residues 240-262 (PYMENVRTTFAQMYETIAKAIQA).

This sequence belongs to the apolipoprotein A1/A4/E family. As to quaternary structure, homodimer. Interacts with naxe and yjefn3.

Its subcellular location is the secreted. Participates in the reverse transport of cholesterol from tissues to the liver for excretion by promoting cholesterol efflux from tissues and by acting as a cofactor for the lecithin cholesterol acyltransferase (LCAT). This chain is Apolipoprotein A-Ia, found in Danio rerio (Zebrafish).